A 206-amino-acid chain; its full sequence is Protein-methionine-sulfoxide reductase heme-binding subunit MsrQ (206 aa).

5 helical membrane passes run isoleucine 13 to glycine 33, leucine 79 to glutamate 99, proline 116 to threonine 136, tryptophan 147 to tryptophan 167, and valine 169 to leucine 189.

This sequence belongs to the MsrQ family. As to quaternary structure, heterodimer of a catalytic subunit (MsrP) and a heme-binding subunit (MsrQ). The cofactor is FMN. Heme b is required as a cofactor.

The protein resides in the cell inner membrane. In terms of biological role, part of the MsrPQ system that repairs oxidized periplasmic proteins containing methionine sulfoxide residues (Met-O), using respiratory chain electrons. Thus protects these proteins from oxidative-stress damage caused by reactive species of oxygen and chlorine generated by the host defense mechanisms. MsrPQ is essential for the maintenance of envelope integrity under bleach stress, rescuing a wide series of structurally unrelated periplasmic proteins from methionine oxidation. MsrQ provides electrons for reduction to the reductase catalytic subunit MsrP, using the quinone pool of the respiratory chain. The protein is Protein-methionine-sulfoxide reductase heme-binding subunit MsrQ of Yersinia pestis bv. Antiqua (strain Antiqua).